The chain runs to 271 residues: 3-methyl-2-oxobutanoate hydroxymethyltransferase (271 aa).

Mg(2+) contacts are provided by aspartate 51 and aspartate 90. 3-methyl-2-oxobutanoate-binding positions include 51–52 (DS), aspartate 90, and lysine 118. Position 120 (glutamate 120) interacts with Mg(2+). The active-site Proton acceptor is the glutamate 186.

Belongs to the PanB family. Homodecamer; pentamer of dimers. The cofactor is Mg(2+).

The protein resides in the cytoplasm. The catalysed reaction is 3-methyl-2-oxobutanoate + (6R)-5,10-methylene-5,6,7,8-tetrahydrofolate + H2O = 2-dehydropantoate + (6S)-5,6,7,8-tetrahydrofolate. The protein operates within cofactor biosynthesis; (R)-pantothenate biosynthesis; (R)-pantoate from 3-methyl-2-oxobutanoate: step 1/2. Functionally, catalyzes the reversible reaction in which hydroxymethyl group from 5,10-methylenetetrahydrofolate is transferred onto alpha-ketoisovalerate to form ketopantoate. This Xanthomonas axonopodis pv. citri (strain 306) protein is 3-methyl-2-oxobutanoate hydroxymethyltransferase.